Reading from the N-terminus, the 480-residue chain is NADH-quinone oxidoreductase subunit N (480 aa).

The next 14 membrane-spanning stretches (helical) occupy residues 11 to 31 (LLPE…GVFA), 38 to 58 (LVAA…AGLL), 76 to 96 (FALY…IAAA), 105 to 125 (APEY…LVSM), 128 to 148 (LFGV…MVAF), 163 to 183 (LITG…IYGV), 195 to 215 (AFGE…ISGL), 240 to 260 (AAFL…RILL), 270 to 290 (WTAL…LLAL), 298 to 318 (MLAY…AALQ), 329 to 349 (VMIY…TIDL), 368 to 388 (AAAM…SGFF), 407 to 427 (VAVA…FGII), and 453 to 473 (VYAM…LAAL).

The protein belongs to the complex I subunit 2 family. NDH-1 is composed of 14 different subunits. Subunits NuoA, H, J, K, L, M, N constitute the membrane sector of the complex.

It is found in the cell membrane. It catalyses the reaction a quinone + NADH + 5 H(+)(in) = a quinol + NAD(+) + 4 H(+)(out). In terms of biological role, NDH-1 shuttles electrons from NADH, via FMN and iron-sulfur (Fe-S) centers, to quinones in the respiratory chain. The immediate electron acceptor for the enzyme in this species is believed to be a menaquinone. Couples the redox reaction to proton translocation (for every two electrons transferred, four hydrogen ions are translocated across the cytoplasmic membrane), and thus conserves the redox energy in a proton gradient. In Rubrobacter xylanophilus (strain DSM 9941 / JCM 11954 / NBRC 16129 / PRD-1), this protein is NADH-quinone oxidoreductase subunit N.